The chain runs to 514 residues: Carboxysome shell carbonic anhydrase (514 aa).

The interval 1–144 (MNTRNTRSKQ…LTAATEQFSR (144 aa)) is N-terminal domain. The segment at 151-397 (DDSASAIGFF…GRYPPNDIGH (247 aa)) is catalytic domain. C173 provides a ligand contact to Zn(2+). D175 serves as the catalytic Proton acceptor. Residues H242 and C253 each contribute to the Zn(2+) site. The tract at residues 398 to 514 (AERYISVGDG…GSPIEEVASA (117 aa)) is C-terminal domain.

It belongs to the beta-class carbonic anhydrase family. CsoSCA subfamily. In terms of assembly, homodimer, may form filaments. Zn(2+) serves as cofactor.

The protein resides in the carboxysome. The catalysed reaction is hydrogencarbonate + H(+) = CO2 + H2O. With respect to regulation, carbonic anhydrase activity is inhibited by ethoxyzolamide, dithiothreitol, cyanide, and divalent metal chelators dipicolinic acid and nitrilotriacetic acid. Functionally, reversible hydration of carbon dioxide. Essential for chemolithotrophic carbon dioxide fixation, supplies CO(2) to RuBisCO (ribulose bisphosphate carboxylase, cbbL-cbbS) in the carboxysome. There are estimated to be 40 CsoSCA dimers per carboxysome. In terms of biological role, unlike beta-carboxysomes, alpha-carboxysomes (Cb) can form without cargo protein. CsoS2 is essential for Cb formation and is also capable of targeting foreign proteins to the Cb. The Cb shell assembles with the aid of CsoS2; CsoS1A, CsoS1B and CsoS1C form the majority of the shell while CsoS4A and CsoS4B form vertices. CsoS1D forms pseudohexamers that probably control metabolite flux into and out of the shell. This Halothiobacillus neapolitanus (strain ATCC 23641 / c2) (Thiobacillus neapolitanus) protein is Carboxysome shell carbonic anhydrase.